A 915-amino-acid polypeptide reads, in one-letter code: Transferrin-binding protein A (915 aa).

The N-terminal stretch at methionine 1 to alanine 24 is a signal peptide. Residues aspartate 38–lysine 45 carry the TonB box motif. Residues arginine 51–lysine 176 enclose the TBDR plug domain. In terms of domain architecture, TBDR beta-barrel spans glutamine 187 to phenylalanine 915. A compositionally biased stretch (polar residues) spans leucine 526–asparagine 540. Residues leucine 526–asparagine 545 are disordered. Residues asparagine 898–phenylalanine 915 carry the TonB C-terminal box motif.

It belongs to the TonB-dependent receptor family. In terms of assembly, binds both human apo- and holo-transferrin (TF), via the TF C-terminus. Forms a large complex with TF and TbpB.

Its subcellular location is the cell outer membrane. In terms of biological role, neisseria acquires iron by extracting it from serum transferrin (TF) in its human host. Acts as a TF receptor and is required for TF utilization. Binds both apo- and holo-TF, via the TF C-terminus. The chain is Transferrin-binding protein A from Neisseria gonorrhoeae.